The following is a 498-amino-acid chain: Protein flp (498 aa).

Helical transmembrane passes span 6 to 26 (LYFL…IYIT), 389 to 409 (FNIV…FSAY), 433 to 453 (LTLC…YLIL), and 471 to 491 (LALI…LLFL).

It is found in the cell membrane. Its precise function is unknown. Has no penicillin-binding activity and is not involved in methicillin resistance. This chain is Protein flp (flp), found in Staphylococcus aureus (strain Mu50 / ATCC 700699).